The following is a 146-amino-acid chain: MNRFLSHVTNRIDAKGRVSVPSVFRAVLLEAGVRELYCFQDFVFPAISVGGPELLDRFEKQMAAEDPFSDAANEMSLLVHGGGVYVKLDPEGRLMVTDFIRDFTGISNDVTFVGRGDHFQLWDPQAFARAQAEAREGRKQRGLRSQ.

SpoVT-AbrB domains lie at 7 to 54 (HVTN…GPEL) and 83 to 126 (GVYV…DPQA).

The protein belongs to the MraZ family. As to quaternary structure, forms oligomers.

It localises to the cytoplasm. It is found in the nucleoid. The sequence is that of Transcriptional regulator MraZ from Rhizobium meliloti (strain 1021) (Ensifer meliloti).